The sequence spans 382 residues: Hyaluronidase (382 aa).

The or 24 signal peptide spans 1–28 (MSRPLVITEGMMIGVLLMLAPINALLLG). The propeptide occupies 29–33 (FVQST). 2 disulfide bridges follow: Cys54/Cys345 and Cys221/Cys233. N-linked (GlcNAc...) asparagine glycosylation occurs at Asn115. The Proton donor role is filled by Glu145. N-linked (GlcNAc...) (complex) asparagine glycosylation occurs at Asn263.

The protein belongs to the glycosyl hydrolase 56 family. In terms of assembly, homotetramer. N-glycosylated. Glycans found include a majority of small oligosaccharides (Man1-3GlcNAc2), most of which are either alpha 1,3-monofucosylated or alpha 1,3-(alpha 1,6-)difucosylated at the innermost GlcNAc residue, approximately 5% of high-mannose type structures, and 8% contains the terminal trisaccharide GalNAc beta 1-4[Fuc alpha 1-3]GlcNAc beta 1-in beta 1,2-linkage to the core alpha 1,3-mannosyl residue. As to expression, expressed in the venom glands of worker bees. It is also detected in the testes of drones but not in the queen-bee venom glands or in pupae.

The protein resides in the secreted. The enzyme catalyses Random hydrolysis of (1-&gt;4)-linkages between N-acetyl-beta-D-glucosamine and D-glucuronate residues in hyaluronate.. Functionally, hydrolyzes high molecular weight hyaluronic acid to produce small oligosaccharides. The protein is Hyaluronidase of Apis mellifera (Honeybee).